The chain runs to 181 residues: Protein AC41 (181 aa).

Functionally, plays a role in late gene expression. The sequence is that of Protein AC41 (AC41) from Autographa californica nuclear polyhedrosis virus (AcMNPV).